A 299-amino-acid polypeptide reads, in one-letter code: MKPDAQHVKQFLLRLQDDICQTLSAVDGANFIEDSWRREAGGGGRSRVLRNGGIFEQAGVNFSHVNGDAMPASATAHRPELVGRSFEAMGVSLVVHPRNPYIPTSHANVRFFIAEKPGADPVWWFGGGFDLTPYYGFEEDAVHWHRTARDLCQPFGEDVYPRYKKWCDDYFFIKHRNEQRGIGGLFFDDLNTPDFASCFAFMQAVGKGYTEAYLPIVERRKTMAWGERERSFQLYRRGRYVEFNLVWDRGTLFGLQTGGRTESILMSMPPLVRWEYDYQPKEGSPEAALSEFIQVRDWV.

A substrate-binding site is contributed by Ser-92. A divalent metal cation contacts are provided by His-96 and His-106. His-106 (proton donor) is an active-site residue. Residue Asn-108 to Arg-110 coordinates substrate. 2 residues coordinate a divalent metal cation: His-145 and His-175. An important for dimerization region spans residues Tyr-240–Glu-275. Residue Gly-258–Arg-260 participates in substrate binding.

It belongs to the aerobic coproporphyrinogen-III oxidase family. As to quaternary structure, homodimer. A divalent metal cation serves as cofactor.

Its subcellular location is the cytoplasm. It carries out the reaction coproporphyrinogen III + O2 + 2 H(+) = protoporphyrinogen IX + 2 CO2 + 2 H2O. Its pathway is porphyrin-containing compound metabolism; protoporphyrin-IX biosynthesis; protoporphyrinogen-IX from coproporphyrinogen-III (O2 route): step 1/1. Involved in the heme biosynthesis. Catalyzes the aerobic oxidative decarboxylation of propionate groups of rings A and B of coproporphyrinogen-III to yield the vinyl groups in protoporphyrinogen-IX. This chain is Oxygen-dependent coproporphyrinogen-III oxidase, found in Salmonella arizonae (strain ATCC BAA-731 / CDC346-86 / RSK2980).